Reading from the N-terminus, the 916-residue chain is Translation initiation factor IF-2 (916 aa).

Residues Asn-151–Glu-191 are compositionally biased toward basic and acidic residues. 2 disordered regions span residues Asn-151–Met-262 and His-280–Thr-328. 2 stretches are compositionally biased toward low complexity: residues Glu-192 to Ala-243 and Arg-293 to Ser-305. The tr-type G domain occupies Ser-415–Lys-584. Positions Gly-424–Thr-431 are G1. Position 424–431 (Gly-424–Thr-431) interacts with GTP. The interval Gly-449–His-453 is G2. Residues Asp-470 to Gly-473 form a G3 region. GTP contacts are provided by residues Asp-470–His-474 and Asn-524–Asp-527. Positions Asn-524 to Asp-527 are G4. A G5 region spans residues Ser-560–Lys-562.

It belongs to the TRAFAC class translation factor GTPase superfamily. Classic translation factor GTPase family. IF-2 subfamily.

The protein resides in the cytoplasm. One of the essential components for the initiation of protein synthesis. Protects formylmethionyl-tRNA from spontaneous hydrolysis and promotes its binding to the 30S ribosomal subunits. Also involved in the hydrolysis of GTP during the formation of the 70S ribosomal complex. The protein is Translation initiation factor IF-2 of Xanthomonas campestris pv. campestris (strain B100).